We begin with the raw amino-acid sequence, 261 residues long: Methyl-coenzyme M reductase subunit gamma (261 aa).

A coenzyme M-binding site is contributed by arginine 123.

This sequence belongs to the methyl-coenzyme M reductase gamma subunit family. MCR is a hexamer of two alpha, two beta, and two gamma chains, forming a dimer of heterotrimers. It depends on coenzyme F430 as a cofactor.

It is found in the cytoplasm. It carries out the reaction coenzyme B + methyl-coenzyme M = methane + coenzyme M-coenzyme B heterodisulfide. It participates in one-carbon metabolism; methyl-coenzyme M reduction; methane from methyl-coenzyme M: step 1/1. Component of the methyl-coenzyme M reductase (MCR) I that catalyzes the reductive cleavage of methyl-coenzyme M (CoM-S-CH3 or 2-(methylthio)ethanesulfonate) using coenzyme B (CoB or 7-mercaptoheptanoylthreonine phosphate) as reductant which results in the production of methane and the mixed heterodisulfide of CoB and CoM (CoM-S-S-CoB). This is the final step in methanogenesis. The chain is Methyl-coenzyme M reductase subunit gamma (mcrG) from Methanococcus voltae.